The sequence spans 390 residues: Cell adhesion molecule 4 (390 aa).

The N-terminal stretch at 1-27 (MAPALTALNRCFVLGILLLVTAGTAFS) is a signal peptide. One can recognise an Ig-like V-type domain in the interval 28-122 (QEVQAENVTV…DTHHQIATLT (95 aa)). Residues 28 to 326 (QEVQAENVTV…IEAQTQVPYA (299 aa)) are Extracellular-facing. Residues N34 and N70 are each glycosylated (N-linked (GlcNAc...) asparagine). 3 disulfide bridges follow: C47–C107, C148–C202, and C247–C293. Ig-like C2-type domains lie at 127–219 (PDNP…TQYE) and 226–309 (PTAS…YVLV). N264 and N288 each carry an N-linked (GlcNAc...) asparagine glycan. The chain crosses the membrane as a helical span at residues 327 to 347 (VIGGILALLVFLVICILIVMV). The Cytoplasmic portion of the chain corresponds to 348–390 (WCSVRQKGSYLTHEASGLDEHGEAREAFLNGGENHKRKEEFFI).

It belongs to the nectin family.

It localises to the membrane. In terms of biological role, involved in the cell-cell adhesion. The polypeptide is Cell adhesion molecule 4 (cadm4) (Xenopus laevis (African clawed frog)).